The primary structure comprises 397 residues: uncharacterized protein (397 aa).

[4Fe-4S] cluster contacts are provided by C47, C53, C56, and C131. The S-adenosyl-L-methionine site is built by Q235, F262, E282, and D328. The active-site Nucleophile is the C354.

Belongs to the class I-like SAM-binding methyltransferase superfamily. RNA M5U methyltransferase family.

This is an uncharacterized protein from Zymomonas mobilis subsp. mobilis (strain ATCC 31821 / ZM4 / CP4).